Reading from the N-terminus, the 100-residue chain is NADH-quinone oxidoreductase subunit K (100 aa).

3 consecutive transmembrane segments (helical) span residues 4–24 (LSYSLSLAAILFMLGLTGIMI), 29–49 (LFLLLGLEIMINAAALAFVIV), and 60–80 (VMYILTVTIAATEASIGLALL).

This sequence belongs to the complex I subunit 4L family. In terms of assembly, NDH-1 is composed of 14 different subunits. Subunits NuoA, H, J, K, L, M, N constitute the membrane sector of the complex.

It localises to the cell membrane. The enzyme catalyses a quinone + NADH + 5 H(+)(in) = a quinol + NAD(+) + 4 H(+)(out). In terms of biological role, NDH-1 shuttles electrons from NADH, via FMN and iron-sulfur (Fe-S) centers, to quinones in the respiratory chain. The immediate electron acceptor for the enzyme in this species is believed to be ubiquinone. Couples the redox reaction to proton translocation (for every two electrons transferred, four hydrogen ions are translocated across the cytoplasmic membrane), and thus conserves the redox energy in a proton gradient. This is NADH-quinone oxidoreductase subunit K from Baumannia cicadellinicola subsp. Homalodisca coagulata.